Here is a 181-residue protein sequence, read N- to C-terminus: ATP-dependent protease subunit HslV (181 aa).

Threonine 11 is a catalytic residue. Residues alanine 166, cysteine 169, and threonine 172 each coordinate Na(+).

It belongs to the peptidase T1B family. HslV subfamily. As to quaternary structure, a double ring-shaped homohexamer of HslV is capped on each side by a ring-shaped HslU homohexamer. The assembly of the HslU/HslV complex is dependent on binding of ATP.

The protein localises to the cytoplasm. The enzyme catalyses ATP-dependent cleavage of peptide bonds with broad specificity.. Allosterically activated by HslU binding. Its function is as follows. Protease subunit of a proteasome-like degradation complex believed to be a general protein degrading machinery. The chain is ATP-dependent protease subunit HslV from Chlorobaculum parvum (strain DSM 263 / NCIMB 8327) (Chlorobium vibrioforme subsp. thiosulfatophilum).